Here is a 546-residue protein sequence, read N- to C-terminus: MANNSPALTGNSQPQHQAAAAAAQQQQQCGGGGATKPAVSGKQGNVLPLWGNEKTMNLNPMILTNILSSPYFKVQLYELKTYHEVVDEIYFKVTHVEPWEKGSRKTAGQTGMCGGVRGVGTGGIVSTAFCLLYKLFTLKLTRKQVMGLITHTDSPYIRALGFMYIRYTQPPTDLWDWFESFLDDEEDLDVKAGGGCVMTIGEMLRSFLTKLEWFSTLFPRIPVPVQKNIDQQIKTRPRKIKKDGKEGAEEIDRHVERRRSRSPRRSLSPRRSPRRSRSRSHHREGHGSSSFDRELEREKERQRLEREAKEREKERRRSRSIDRGLERRRSRSRERHRSRSRSRDRKGDRRDRDREREKENERGRRRDRDYDKERGNEREKERERSRERSKEQRSRGEVEEKKHKEDKDDRRHRDDKRDSKKEKKHSRSRSRERKHRSRSRSRNAGKRSRSRSKEKSSKHKNESKEKSNKRSRSGSQGRTDSVEKSKKREHSPSKEKSRKRSRSKERSHKRDHSDSKDQSDKHDRRRSQSIEQESQEKQHKNKDETV.

Polar residues predominate over residues 1–14; sequence MANNSPALTGNSQP. The interval 1-40 is disordered; that stretch reads MANNSPALTGNSQPQHQAAAAAAQQQQQCGGGGATKPAVS. A2 is modified (N-acetylalanine). Position 5 is a phosphoserine (S5). The span at 15–28 shows a compositional bias: low complexity; the sequence is QHQAAAAAAQQQQQ. The residue at position 227 (K227) is an N6-acetyllysine. The segment at 229–546 is disordered; it reads IDQQIKTRPR…KQHKNKDETV (318 aa). The span at 243–255 shows a compositional bias: basic and acidic residues; that stretch reads DGKEGAEEIDRHV. Basic residues predominate over residues 256 to 284; it reads ERRRSRSPRRSLSPRRSPRRSRSRSHHRE. 4 positions are modified to phosphoserine: S288, S290, S318, and S320. Residues 291–327 are compositionally biased toward basic and acidic residues; sequence FDRELEREKERQRLEREAKEREKERRRSRSIDRGLER. The stretch at 292–321 forms a coiled coil; sequence DRELEREKERQRLEREAKEREKERRRSRSI. The segment covering 328–344 has biased composition (basic residues); that stretch reads RRSRSRERHRSRSRSRD. The segment covering 345–421 has biased composition (basic and acidic residues); it reads RKGDRRDRDR…HRDDKRDSKK (77 aa). A compositionally biased stretch (basic residues) spans 422 to 450; that stretch reads EKKHSRSRSRERKHRSRSRSRNAGKRSRS. S448 carries the phosphoserine modification. The segment covering 451–468 has biased composition (basic and acidic residues); that stretch reads RSKEKSSKHKNESKEKSN. Residues S473, S475, and S481 each carry the phosphoserine modification. The segment covering 480 to 495 has biased composition (basic and acidic residues); the sequence is DSVEKSKKREHSPSKE. Residues 496–510 show a composition bias toward basic residues; the sequence is KSRKRSRSKERSHKR. Positions 511–546 are enriched in basic and acidic residues; that stretch reads DHSDSKDQSDKHDRRRSQSIEQESQEKQHKNKDETV. 3 positions are modified to phosphoserine: S527, S529, and S534.

The protein belongs to the PRP38 family.

The protein resides in the nucleus. May be required for pre-mRNA splicing. This Homo sapiens (Human) protein is Pre-mRNA-splicing factor 38B (PRPF38B).